Reading from the N-terminus, the 415-residue chain is MKILLVGNHTCGNRGDGAILRGIIDSLHLERTDLDIDIISRFPTSSSYLLQQNILPDELFLETKKSNSLVAKVKRRLMPKIMMAHIRGSGFFKNLAVPEYLQQFTDKLKQYDAVIQVGGSFFVDLYGPLQFEHSLCALLAKKPVYMIGHSVGPFQKERFNQIANFVFSRVNSLVLRESVSLEMMEKAGITTQKVIPGADTAFLVRTRTLDAPGHNLIHWQNQIAASKTIAITVRELAPFDKRLGVTQQEYEMAFGKVINAMIERGYQVVALSTCTGIDSYHRDDRMVAITLGDYVQQKDKYRVVMDEFNDLELGILLAGCHLTIGTRLHSAIISMNFGTPAVAINYEHKSLGVMKQLGLPEMASDVQSLMDGSIIAKVNGVLDNYEEIEQQVARAVEQERILGNKITADVLKSIG.

It belongs to the polysaccharide pyruvyl transferase family.

Its pathway is glycan metabolism; exopolysaccharide biosynthesis. In terms of biological role, involved in the biosynthesis of amylovoran which functions as a virulence factor. The polypeptide is Amylovoran biosynthesis protein AmsJ (amsJ) (Erwinia amylovora (Fire blight bacteria)).